Consider the following 565-residue polypeptide: Frizzled-2 (565 aa).

The signal sequence occupies residues 1-23; it reads MRPRSALPRLLLPLLLLPAAGPA. Topologically, residues 24–247 are extracellular; sequence QFHGEKGISI…QEETRFARLW (224 aa). Residues 34-153 enclose the FZ domain; the sequence is PDHGFCQPIS…HGAEQICVGQ (120 aa). 5 disulfide bridges follow: Cys-39–Cys-100, Cys-47–Cys-93, Cys-84–Cys-121, Cys-110–Cys-150, and Cys-114–Cys-138. N-linked (GlcNAc...) asparagine glycosylation is present at Asn-53. Asn-154 is a glycosylation site (N-linked (GlcNAc...) asparagine). The segment at 160-189 is disordered; that stretch reads APALLTTAPPPGLQPGAGGTPGGPGGGGAP. Residues 174 to 188 show a composition bias toward gly residues; sequence PGAGGTPGGPGGGGA. A helical membrane pass occupies residues 248 to 268; the sequence is ILTWSVLCCASTFFTVTTYLV. The Cytoplasmic segment spans residues 269–279; that stretch reads DMQRFRYPERP. The chain crosses the membrane as a helical span at residues 280–300; that stretch reads IIFLSGCYTMVSVAYIAGFVL. Topologically, residues 301-327 are extracellular; the sequence is QERVVCNERFSEDGYRTVVQGTKKEGC. The chain crosses the membrane as a helical span at residues 328–348; the sequence is TILFMMLYFFSMASSIWWVIL. Residues 349 to 370 are Cytoplasmic-facing; the sequence is SLTWFLAAGMKWGHEAIEANSQ. Residues 371–391 traverse the membrane as a helical segment; it reads YFHLAAWAVPAVKTITILAMG. The Extracellular segment spans residues 392-414; sequence QIDGDLLSGVCFVGLNSLDPLRG. The chain crosses the membrane as a helical span at residues 415–435; sequence FVLAPLFVYLFIGTSFLLAGF. At 436-461 the chain is on the cytoplasmic side; it reads VSLFRIRTIMKHDGTKTEKLERLMVR. A helical membrane pass occupies residues 462–482; that stretch reads IGVFSVLYTVPATIVIACYFY. Over 483-519 the chain is Extracellular; sequence EQAFREHWERSWVSQHCKSLAIPCPAHYTPRMSPDFT. The helical transmembrane segment at 520 to 540 threads the bilayer; sequence VYMIKYLMTLIVGITSGFWIW. Over 541 to 565 the chain is Cytoplasmic; it reads SGKTLHSWRKFYTRLTNSRHGETTV. The short motif at 543–548 is the Lys-Thr-X-X-X-Trp motif, mediates interaction with the PDZ domain of Dvl family members element; that stretch reads KTLHSW. The PDZ-binding signature appears at 563-565; sequence TTV.

Belongs to the G-protein coupled receptor Fz/Smo family. (Microbial infection) Interacts with C.difficile toxin TcdB; frizzled receptors constitute the major host receptors for TcdB in the colonic epithelium. In terms of processing, ubiquitinated by ZNRF3, leading to its degradation by the proteasome. As to expression, widely expressed. In the adult, mainly found in heart, placenta, skeletal muscle, lung, kidney, pancreas, prostate, testis, ovary and colon. In the fetus, expressed in brain, lung and kidney. Low levels in fetal liver.

The protein resides in the membrane. It localises to the cell membrane. Receptor for Wnt proteins. Most of frizzled receptors are coupled to the beta-catenin canonical signaling pathway, which leads to the activation of disheveled proteins, inhibition of GSK-3 kinase, nuclear accumulation of beta-catenin and activation of Wnt target genes. A second signaling pathway involving PKC and calcium fluxes has been seen for some family members, but it is not yet clear if it represents a distinct pathway or if it can be integrated in the canonical pathway, as PKC seems to be required for Wnt-mediated inactivation of GSK-3 kinase. Both pathways seem to involve interactions with G-proteins. May be involved in transduction and intercellular transmission of polarity information during tissue morphogenesis and/or in differentiated tissues. Functionally, (Microbial infection) Acts as a receptor for C.difficile toxin TcdB in the colonic epithelium. TcdB occupies the binding site for Wnt-adducted palmitoleate in frizzled receptors and TcdB-binding prevents Wnt-binding and downstream Wnt signaling. The sequence is that of Frizzled-2 (FZD2) from Homo sapiens (Human).